A 433-amino-acid chain; its full sequence is Oxaloacetate decarboxylase beta chain 2 (433 aa).

A run of 10 helical transmembrane segments spans residues 16-36, 42-62, 122-142, 168-188, 190-210, 216-236, 266-286, 311-331, 340-360, and 413-433; these read LGAG…LAIA, LLLL…AGMA, VLAL…VIFM, FGIF…LIAF, LPQA…AIYL, PELL…VPLI, ILFP…AAPL, NGLI…KLVA, LGIL…GVLM, and VAGV…VLAM.

Belongs to the GcdB/MmdB/OadB family. Heterotrimer of an alpha, a beta and a gamma subunit. Requires Na(+) as cofactor.

The protein localises to the cell membrane. The catalysed reaction is oxaloacetate + 2 Na(+)(in) + H(+) = pyruvate + 2 Na(+)(out) + CO2. Catalyzes the decarboxylation of oxaloacetate coupled to Na(+) translocation. The chain is Oxaloacetate decarboxylase beta chain 2 (oadB2) from Salmonella typhi.